The sequence spans 178 residues: Large ribosomal subunit protein uL6 (178 aa).

Belongs to the universal ribosomal protein uL6 family. As to quaternary structure, part of the 50S ribosomal subunit.

Functionally, this protein binds to the 23S rRNA, and is important in its secondary structure. It is located near the subunit interface in the base of the L7/L12 stalk, and near the tRNA binding site of the peptidyltransferase center. The polypeptide is Large ribosomal subunit protein uL6 (Streptococcus uberis (strain ATCC BAA-854 / 0140J)).